Here is a 218-residue protein sequence, read N- to C-terminus: Pyridoxine/pyridoxamine 5'-phosphate oxidase (218 aa).

Substrate contacts are provided by residues 12–15 (RLAY) and R70. FMN contacts are provided by residues 65-70 (RTVLLR), 80-81 (YT), K87, and Q109. Positions 127, 131, and 135 each coordinate substrate. Residues 145–146 (QS) and W191 each bind FMN. 197-199 (RLH) contributes to the substrate binding site. R201 contacts FMN.

This sequence belongs to the pyridoxamine 5'-phosphate oxidase family. As to quaternary structure, homodimer. It depends on FMN as a cofactor.

It catalyses the reaction pyridoxamine 5'-phosphate + O2 + H2O = pyridoxal 5'-phosphate + H2O2 + NH4(+). It carries out the reaction pyridoxine 5'-phosphate + O2 = pyridoxal 5'-phosphate + H2O2. The protein operates within cofactor metabolism; pyridoxal 5'-phosphate salvage; pyridoxal 5'-phosphate from pyridoxamine 5'-phosphate: step 1/1. Its pathway is cofactor metabolism; pyridoxal 5'-phosphate salvage; pyridoxal 5'-phosphate from pyridoxine 5'-phosphate: step 1/1. Functionally, catalyzes the oxidation of either pyridoxine 5'-phosphate (PNP) or pyridoxamine 5'-phosphate (PMP) into pyridoxal 5'-phosphate (PLP). This chain is Pyridoxine/pyridoxamine 5'-phosphate oxidase, found in Deinococcus geothermalis (strain DSM 11300 / CIP 105573 / AG-3a).